Reading from the N-terminus, the 41-residue chain is MRSSIAPTAPAACSSKRWYPSVCEPDVRNQKNWGHPITPCA.

This is an uncharacterized protein from Treponema pallidum (strain Nichols).